A 104-amino-acid chain; its full sequence is Large ribosomal subunit protein uL24 (104 aa).

The protein belongs to the universal ribosomal protein uL24 family. Part of the 50S ribosomal subunit.

In terms of biological role, one of two assembly initiator proteins, it binds directly to the 5'-end of the 23S rRNA, where it nucleates assembly of the 50S subunit. One of the proteins that surrounds the polypeptide exit tunnel on the outside of the subunit. The chain is Large ribosomal subunit protein uL24 from Nitrobacter winogradskyi (strain ATCC 25391 / DSM 10237 / CIP 104748 / NCIMB 11846 / Nb-255).